A 122-amino-acid polypeptide reads, in one-letter code: Succinate dehydrogenase assembly factor 3, mitochondrial (122 aa).

Residues 1 to 47 constitute a mitochondrion transit peptide; sequence MHPSVVRLVKPRRPERITSPILPPLPLYRAILRAHHRKLPQELRYLG.

Belongs to the complex I LYR family. SDHAF3 subfamily. As to quaternary structure, interacts with the iron-sulfur protein subunit within the SDH catalytic dimer.

Its subcellular location is the mitochondrion matrix. Plays an essential role in the assembly of succinate dehydrogenase (SDH), an enzyme complex (also referred to as respiratory complex II) that is a component of both the tricarboxylic acid (TCA) cycle and the mitochondrial electron transport chain, and which couples the oxidation of succinate to fumarate with the reduction of ubiquinone (coenzyme Q) to ubiquinol. Promotes maturation of the iron-sulfur protein subunit of the SDH catalytic dimer, protecting it from the deleterious effects of oxidants. May act together with SDHAF1. The chain is Succinate dehydrogenase assembly factor 3, mitochondrial from Candida albicans (strain SC5314 / ATCC MYA-2876) (Yeast).